A 342-amino-acid polypeptide reads, in one-letter code: Growth hormone-regulated TBC protein 1 (342 aa).

A Rab-GAP TBC domain is found at 72–263 (GIPNEHRSHV…RIWDCLFFEG (192 aa)).

Its function is as follows. May act as a GTPase-activating protein for Rab family protein(s). The protein is Growth hormone-regulated TBC protein 1 (grtp1) of Xenopus tropicalis (Western clawed frog).